The sequence spans 961 residues: Outer capsid protein VP2 (961 aa).

Belongs to the orbivirus VP2 family.

The protein resides in the virion. In terms of biological role, the VP2 protein is one of the two proteins (with VP5) which constitute the virus particle outer capsid. It is the major target of the host immunogenic response. Responsible for viral attachment to target host cell, probably by binding to sialic acid. This attachment induces virion internalization predominantly through clathrin-dependent endocytosis. The sequence is that of Outer capsid protein VP2 (Segment-2) from Bluetongue virus 1 (isolate South Africa vaccine) (BTV 1).